A 155-amino-acid chain; its full sequence is Ribosomal RNA large subunit methyltransferase H (155 aa).

S-adenosyl-L-methionine is bound by residues Leu-72, Gly-103, and 122–127 (LSALTL).

It belongs to the RNA methyltransferase RlmH family. Homodimer.

The protein resides in the cytoplasm. It catalyses the reaction pseudouridine(1915) in 23S rRNA + S-adenosyl-L-methionine = N(3)-methylpseudouridine(1915) in 23S rRNA + S-adenosyl-L-homocysteine + H(+). Its function is as follows. Specifically methylates the pseudouridine at position 1915 (m3Psi1915) in 23S rRNA. This is Ribosomal RNA large subunit methyltransferase H from Cronobacter sakazakii (strain ATCC BAA-894) (Enterobacter sakazakii).